The following is a 354-amino-acid chain: Elongation factor Ts (354 aa).

Residues 81 to 84 (TDFV) form an involved in Mg(2+) ion dislocation from EF-Tu region.

It belongs to the EF-Ts family.

It is found in the cytoplasm. Functionally, associates with the EF-Tu.GDP complex and induces the exchange of GDP to GTP. It remains bound to the aminoacyl-tRNA.EF-Tu.GTP complex up to the GTP hydrolysis stage on the ribosome. The sequence is that of Elongation factor Ts from Campylobacter concisus (strain 13826).